The following is a 388-amino-acid chain: Gastricsin (388 aa).

An N-terminal signal peptide occupies residues 1 to 16 (MKWLLVALVCLHLLEA). Residues 17 to 59 (AVIKVPLRKFKSIRETLKEKGLLKEFLNTHKYDPALKYRFGDF) constitute a propeptide, activation peptide. Positions 73-385 (YFGEISIGTP…DMANNRVGFA (313 aa)) constitute a Peptidase A1 domain. Residue Asp-91 is part of the active site. 2 disulfide bridges follow: Cys-104–Cys-109 and Cys-267–Cys-271. The active site involves Asp-276. Cys-310 and Cys-343 are joined by a disulfide.

It belongs to the peptidase A1 family.

The protein resides in the secreted. The catalysed reaction is More restricted specificity than pepsin A, but shows preferential cleavage at Tyr-|-Xaa bonds. High activity on hemoglobin.. Hydrolyzes a variety of proteins. This chain is Gastricsin (PGC), found in Oryctolagus cuniculus (Rabbit).